The chain runs to 1641 residues: Cortactin-binding protein 2 (1641 aa).

Residues 1 to 27 are disordered; that stretch reads MATDGASCEPDFSRAPEDAAGAPAEAA. A coiled-coil region spans residues 119 to 276; it reads RKMQERMSTQ…EQLKRGNDSK (158 aa). Disordered regions lie at residues 361–433, 446–472, and 488–588; these read SHGD…HPGL, GSNA…PTSR, and ALSR…PQGN. A compositionally biased stretch (polar residues) spans 385-405; it reads GPSTGSTPDLTSSPTALPSTV. The residue at position 491 (R491) is an Asymmetric dimethylarginine. Residues 497 to 506 show a composition bias toward pro residues; that stretch reads AGAPPRPGAP. Polar residues predominate over residues 576–586; that stretch reads TVASSPSSLPQ. 6 ANK repeats span residues 702-732, 736-765, 769-798, 802-831, 835-864, and 903-933; these read GRPT…DINY, DGHS…QVNA, NGFT…NINH, GGQT…DRSV, DGWT…PAHG, and EGWT…EPER. The segment at 1442–1468 is disordered; sequence AWRKVSTSPRKKSGRFSSPTWNKPDLS. The residue at position 1512 (S1512) is a Phosphoserine. The segment at 1544–1641 is disordered; the sequence is LRRFDSSGNN…NSRDLEPTQK (98 aa). Polar residues-rich tracts occupy residues 1551–1562 and 1570–1579; these read GNNPVFSATVNN and KEVSPLSSHQ. Residues 1580 to 1590 are compositionally biased toward basic and acidic residues; the sequence is MTERSNSKSKT. A compositionally biased stretch (low complexity) spans 1612–1626; it reads SQNTKRSSSSSNTRQ.

In terms of assembly, interacts with CTTN/cortactin SH3 domain. Interacts with STRN, STRN4/zinedin and MOB4/phocein; this interactions mediate the association with the STRIPAK core complex and may regulate dendritic spine distribution of the STRIPAK complex in hippocampal neurons. Activation of glutamate receptors weakens the interaction with STRN and STRN4.

It localises to the cytoplasm. The protein localises to the cell cortex. The protein resides in the cell projection. Its subcellular location is the dendritic spine. Its function is as follows. Regulates the dendritic spine distribution of CTTN/cortactin in hippocampal neurons, and thus controls dendritic spinogenesis and dendritic spine maintenance. Associates with the striatin-interacting phosphatase and kinase (STRIPAK) core complex to regulate dendritic spine distribution of the STRIPAK complex in hippocampal neurons. The chain is Cortactin-binding protein 2 (CTTNBP2) from Ovis aries (Sheep).